A 308-amino-acid polypeptide reads, in one-letter code: Bacitracin transport ATP-binding protein BcrA (308 aa).

Positions 8–236 (IETENLTKQY…NRKYTEFDVS (229 aa)) constitute an ABC transporter domain. ATP is bound at residue 40–47 (GRNGAGKT).

It belongs to the ABC transporter superfamily. The complex is probably composed of two ATP-binding proteins (BcrA) and two transmembrane proteins (BcrB).

In terms of biological role, essential for high-level bacitracin resistance. Part of the ABC transporter complex BcrAB. Probably responsible for energy coupling to the transport system. This is Bacitracin transport ATP-binding protein BcrA from Enterococcus faecalis (Streptococcus faecalis).